The primary structure comprises 657 residues: Methionine--tRNA ligase (657 aa).

The 'HIGH' region motif lies at 13–23 (YYPSGNLHIGH). The 'KMSKS' region motif lies at 308 to 312 (KMSKS). Lys-311 contacts ATP. The 101-residue stretch at 557–657 (DFDKVEIKAA…SAIPNGAVIK (101 aa)) folds into the tRNA-binding domain.

It belongs to the class-I aminoacyl-tRNA synthetase family. MetG type 2B subfamily. In terms of assembly, homodimer.

It is found in the cytoplasm. The catalysed reaction is tRNA(Met) + L-methionine + ATP = L-methionyl-tRNA(Met) + AMP + diphosphate. In terms of biological role, is required not only for elongation of protein synthesis but also for the initiation of all mRNA translation through initiator tRNA(fMet) aminoacylation. In Staphylococcus aureus (strain COL), this protein is Methionine--tRNA ligase.